Consider the following 578-residue polypeptide: Telomere repeat-binding protein 1 (578 aa).

Positions 293-372 constitute a Ubiquitin-like domain; the sequence is VKLRIKSFRV…HLDSLDFSLE (80 aa). A disordered region spans residues 440–467; it reads ELSSQSQPPSRKSRRSEQQQQQAAQRRI. The region spanning 463–522 is the HTH myb-type domain; it reads AQRRIRRPFSVAEVEALVQAVEKLGTGRWRDVKLCAFEDADHRTYVDLKDKWKTLVHTAK. Interaction with DNA regions lie at residues 465-469, 511-515, and 522-529; these read RRIRR, KDKWK, and KISPQQRR. The H-T-H motif DNA-binding region spans 491–518; the sequence is WRDVKLCAFEDADHRTYVDLKDKWKTLV.

Homodimer and heterodimer with TRP2 and TRP3. Interacts with KU70. As to expression, expressed ubiquitously. Highest expression in flowers and leaves.

It localises to the nucleus. Its function is as follows. Binds specifically to the plant telomeric double-stranded DNA sequences 5'-GGTTTAG-3'. At least 4 repeats of telomeric sequences are required for binding. Induces DNA bending. The sequence is that of Telomere repeat-binding protein 1 (TRP1) from Arabidopsis thaliana (Mouse-ear cress).